We begin with the raw amino-acid sequence, 143 residues long: Large ribosomal subunit protein uL15 (143 aa).

The interval M1–G52 is disordered. Over residues R21 to S31 the composition is skewed to gly residues.

This sequence belongs to the universal ribosomal protein uL15 family. Part of the 50S ribosomal subunit.

Functionally, binds to the 23S rRNA. This is Large ribosomal subunit protein uL15 from Francisella tularensis subsp. holarctica (strain FTNF002-00 / FTA).